The chain runs to 254 residues: Thiazole synthase (254 aa).

Residue Lys95 is the Schiff-base intermediate with DXP of the active site. 1-deoxy-D-xylulose 5-phosphate contacts are provided by residues Gly156, 182-183 (AG), and 204-205 (NT).

It belongs to the ThiG family. As to quaternary structure, homotetramer. Forms heterodimers with either ThiH or ThiS.

It localises to the cytoplasm. The enzyme catalyses [ThiS sulfur-carrier protein]-C-terminal-Gly-aminoethanethioate + 2-iminoacetate + 1-deoxy-D-xylulose 5-phosphate = [ThiS sulfur-carrier protein]-C-terminal Gly-Gly + 2-[(2R,5Z)-2-carboxy-4-methylthiazol-5(2H)-ylidene]ethyl phosphate + 2 H2O + H(+). Its pathway is cofactor biosynthesis; thiamine diphosphate biosynthesis. Its function is as follows. Catalyzes the rearrangement of 1-deoxy-D-xylulose 5-phosphate (DXP) to produce the thiazole phosphate moiety of thiamine. Sulfur is provided by the thiocarboxylate moiety of the carrier protein ThiS. In vitro, sulfur can be provided by H(2)S. This Shewanella piezotolerans (strain WP3 / JCM 13877) protein is Thiazole synthase.